Consider the following 380-residue polypeptide: PqqA peptide cyclase (380 aa).

A Radical SAM core domain is found at 12 to 228; that stretch reads FGIPLAVLLE…EEARERLKGR (217 aa). Positions 26, 30, and 33 each coordinate [4Fe-4S] cluster.

It belongs to the radical SAM superfamily. PqqE family. As to quaternary structure, interacts with PqqD. The interaction is necessary for activity of PqqE. [4Fe-4S] cluster serves as cofactor.

The catalysed reaction is [PQQ precursor protein] + S-adenosyl-L-methionine = E-Y cross-linked-[PQQ precursor protein] + 5'-deoxyadenosine + L-methionine + H(+). It functions in the pathway cofactor biosynthesis; pyrroloquinoline quinone biosynthesis. Its function is as follows. Catalyzes the cross-linking of a glutamate residue and a tyrosine residue in the PqqA protein as part of the biosynthesis of pyrroloquinoline quinone (PQQ). In Bradyrhizobium diazoefficiens (strain JCM 10833 / BCRC 13528 / IAM 13628 / NBRC 14792 / USDA 110), this protein is PqqA peptide cyclase.